The following is a 212-amino-acid chain: Imidazole glycerol phosphate synthase subunit HisH (212 aa).

The Glutamine amidotransferase type-1 domain maps to 1–211 (MIGVIDYGMG…TKMAAEQQVK (211 aa)). Residue Cys79 is the Nucleophile of the active site. Active-site residues include His186 and Glu188.

As to quaternary structure, heterodimer of HisH and HisF.

The protein resides in the cytoplasm. It carries out the reaction 5-[(5-phospho-1-deoxy-D-ribulos-1-ylimino)methylamino]-1-(5-phospho-beta-D-ribosyl)imidazole-4-carboxamide + L-glutamine = D-erythro-1-(imidazol-4-yl)glycerol 3-phosphate + 5-amino-1-(5-phospho-beta-D-ribosyl)imidazole-4-carboxamide + L-glutamate + H(+). The catalysed reaction is L-glutamine + H2O = L-glutamate + NH4(+). Its pathway is amino-acid biosynthesis; L-histidine biosynthesis; L-histidine from 5-phospho-alpha-D-ribose 1-diphosphate: step 5/9. IGPS catalyzes the conversion of PRFAR and glutamine to IGP, AICAR and glutamate. The HisH subunit catalyzes the hydrolysis of glutamine to glutamate and ammonia as part of the synthesis of IGP and AICAR. The resulting ammonia molecule is channeled to the active site of HisF. In Bacillus velezensis (strain DSM 23117 / BGSC 10A6 / LMG 26770 / FZB42) (Bacillus amyloliquefaciens subsp. plantarum), this protein is Imidazole glycerol phosphate synthase subunit HisH.